Consider the following 262-residue polypeptide: Regulatory protein RecX (262 aa).

Belongs to the RecX family.

The protein localises to the cytoplasm. Functionally, modulates RecA activity. The polypeptide is Regulatory protein RecX (Photobacterium profundum (strain SS9)).